The following is a 542-amino-acid chain: uncharacterized protein (542 aa).

An N-linked (GlcNAc...) asparagine glycan is attached at Asn-6. The next 8 helical transmembrane spans lie at 61-81, 95-115, 139-159, 188-208, 217-237, 255-275, 298-318, and 348-368; these read FSTWATFSFAFSISGLFATVV, SAVWCWLIAGAGCMCIALSVA, SMPVVAWVVGWLNLLGQAAGV, HIVGVMAAVIVFHGLVNSLST, FYATFHLIVLVVCMICLLAKC, GWHPIGFSFLFGFLSVAWCMT, IALALSITYVLGWVFNIVLAF, and GSMAFTILSFIIINFTGITAM. Asn-394 carries N-linked (GlcNAc...) asparagine glycosylation. 4 consecutive transmembrane segments (helical) span residues 402 to 422, 424 to 444, 469 to 489, and 500 to 520; these read IAVWLNVVFCIALNLIGLGSI, AIEAIFSVCAIALDWSYVIPI, FVNAYAVCWTAFVSVIFLMPT, and YAVVVLAGVLLFSLVYWWSGA.

It belongs to the amino acid-polyamine-organocation (APC) superfamily.

It is found in the golgi apparatus. The protein resides in the membrane. This is an uncharacterized protein from Schizosaccharomyces pombe (strain 972 / ATCC 24843) (Fission yeast).